The sequence spans 198 residues: COMM domain-containing protein 9 (198 aa).

An N-acetylalanine modification is found at Ala2. Residues 122-196 (RLVDLDWRVD…RIRDQLSAVA (75 aa)) form the COMM domain.

The protein belongs to the COMM domain-containing protein 9 family. As to quaternary structure, component of the commander complex consisting of the CCC subcomplex and the retriever subcomplex. Component of the CCC (COMMD/CCDC22/CCDC93) subcomplex consisting of COMMD1, COMMD2, COMMD3, COMMD4, COMMD5, COMMD6, COMMD7, COMMD8, COMMD9, COMMD10, CCDC22 and CCDC93; within the complex forms a heterodimer with COMMD7. Interacts with RELB and NFKB1/p105. Interacts with CCDC22, CCDC93, SCNN1B, CUL1.

The protein resides in the nucleus. The protein localises to the cytoplasmic vesicle. Functionally, scaffold protein in the commander complex that is essential for endosomal recycling of transmembrane cargos; the commander complex is composed of the CCC subcomplex and the retriever subcomplex. May modulate activity of cullin-RING E3 ubiquitin ligase (CRL) complexes. May down-regulate activation of NF-kappa-B. Modulates Na(+) transport in epithelial cells by regulation of apical cell surface expression of amiloride-sensitive sodium channel (ENaC) subunits. This chain is COMM domain-containing protein 9 (COMMD9), found in Bos taurus (Bovine).